Reading from the N-terminus, the 1892-residue chain is Kinesin-like protein KIN-12E (1892 aa).

A disordered region spans residues 1 to 28; sequence MAGHGAGGRRASTSRAAARRVEAETNEN. Positions 64–401 constitute a Kinesin motor domain; sequence NVQVLIRIRP…LKFAQRAKLI (338 aa). 145–152 is a binding site for ATP; the sequence is GQTGSGKT. Coiled-coil stretches lie at residues 406-438, 486-526, 1066-1139, 1303-1357, and 1396-1528; these read KVNE…QQNM, SLRR…TTVK, LFSN…LHEQ, KLLQ…LAEN, and ISET…SYQI. The segment covering 1633–1649 has biased composition (basic and acidic residues); sequence LHESNSDTGHTKFEKPS. The interval 1633–1656 is disordered; that stretch reads LHESNSDTGHTKFEKPSGRTRGSG. Positions 1780 to 1841 form a coiled coil; the sequence is MDQRKADLLE…LVGSNQAIAE (62 aa). The segment at 1870 to 1892 is disordered; that stretch reads HARHEHSRLQAAKSSRTRRGSHQ.

It belongs to the TRAFAC class myosin-kinesin ATPase superfamily. Kinesin family. KIN-12 subfamily.

In Oryza sativa subsp. japonica (Rice), this protein is Kinesin-like protein KIN-12E.